Here is a 66-residue protein sequence, read N- to C-terminus: uncharacterized protein (66 aa).

Residues 32-49 traverse the membrane as a helical segment; the sequence is WAFSLLIAGSAFLWIYMR.

The protein localises to the membrane. This is an uncharacterized protein from Bacillus subtilis (strain 168).